The sequence spans 733 residues: Phosphoribosylformylglycinamidine synthase subunit PurL (733 aa).

Residue H44 is part of the active site. 2 residues coordinate ATP: Y47 and K86. E88 is a Mg(2+) binding site. Substrate is bound by residues 89–92 (SHNH) and R111. Residue H90 is the Proton acceptor of the active site. Mg(2+) is bound at residue D112. Q233 contacts substrate. Residue D261 participates in Mg(2+) binding. 305 to 307 (ESQ) provides a ligand contact to substrate. Positions 492 and 529 each coordinate ATP. N530 is a Mg(2+) binding site. Position 532 (S532) interacts with substrate.

The protein belongs to the FGAMS family. As to quaternary structure, monomer. Part of the FGAM synthase complex composed of 1 PurL, 1 PurQ and 2 PurS subunits.

The protein resides in the cytoplasm. It carries out the reaction N(2)-formyl-N(1)-(5-phospho-beta-D-ribosyl)glycinamide + L-glutamine + ATP + H2O = 2-formamido-N(1)-(5-O-phospho-beta-D-ribosyl)acetamidine + L-glutamate + ADP + phosphate + H(+). Its pathway is purine metabolism; IMP biosynthesis via de novo pathway; 5-amino-1-(5-phospho-D-ribosyl)imidazole from N(2)-formyl-N(1)-(5-phospho-D-ribosyl)glycinamide: step 1/2. Its function is as follows. Part of the phosphoribosylformylglycinamidine synthase complex involved in the purines biosynthetic pathway. Catalyzes the ATP-dependent conversion of formylglycinamide ribonucleotide (FGAR) and glutamine to yield formylglycinamidine ribonucleotide (FGAM) and glutamate. The FGAM synthase complex is composed of three subunits. PurQ produces an ammonia molecule by converting glutamine to glutamate. PurL transfers the ammonia molecule to FGAR to form FGAM in an ATP-dependent manner. PurS interacts with PurQ and PurL and is thought to assist in the transfer of the ammonia molecule from PurQ to PurL. The sequence is that of Phosphoribosylformylglycinamidine synthase subunit PurL from Thermomicrobium roseum (strain ATCC 27502 / DSM 5159 / P-2).